The primary structure comprises 284 residues: Parvulin-like PPIase (284 aa).

The first 20 residues, 1–20 (MKKLSIVLLSVSMLSSIAFA), serve as a signal peptide directing secretion. Residues 139-232 (KEQIKVAHIL…YGWHIIKVLE (94 aa)) enclose the PpiC domain.

This sequence belongs to the PpiC/parvulin rotamase family.

The protein resides in the cell outer membrane. It catalyses the reaction [protein]-peptidylproline (omega=180) = [protein]-peptidylproline (omega=0). The polypeptide is Parvulin-like PPIase (plp) (Rickettsia bellii (strain RML369-C)).